A 393-amino-acid chain; its full sequence is Argininosuccinate synthase (393 aa).

Residues 10 to 18 and A37 contribute to the ATP site; that span reads AYSGGLDTS. An L-citrulline-binding site is contributed by Y88. G118 is an ATP binding site. L-aspartate-binding residues include T120, N124, and D125. L-citrulline is bound at residue N124. Residues R128, S176, S185, E261, and Y273 each coordinate L-citrulline.

It belongs to the argininosuccinate synthase family. Type 1 subfamily. In terms of assembly, homotetramer.

It is found in the cytoplasm. The catalysed reaction is L-citrulline + L-aspartate + ATP = 2-(N(omega)-L-arginino)succinate + AMP + diphosphate + H(+). It functions in the pathway amino-acid biosynthesis; L-arginine biosynthesis; L-arginine from L-ornithine and carbamoyl phosphate: step 2/3. In Carsonella ruddii (strain PV), this protein is Argininosuccinate synthase.